Consider the following 163-residue polypeptide: Bursicon (163 aa).

An N-terminal signal peptide occupies residues 1 to 23; sequence MKSTFLVVLELAFFLLPGRVLYA. Intrachain disulfides connect cysteine 39/cysteine 88, cysteine 53/cysteine 102, cysteine 63/cysteine 123, cysteine 67/cysteine 125, and cysteine 85/cysteine 128. A CTCK domain is found at 39 to 129; it reads CQVTPVIHVL…PLECMCRPCT (91 aa).

As to quaternary structure, heterodimer of burs and pburs.

It is found in the secreted. Final heterodimeric neurohormone released at the end of the molting cycle, involved in the sclerotization (tanning) of the insect cuticle, melanization and wing spreading. This chain is Bursicon (burs124), found in Anopheles gambiae (African malaria mosquito).